The chain runs to 411 residues: Lycopene beta cyclase (411 aa).

Position 4–32 (4–32) interacts with NAD(+); it reads ALVIGSGPAGLAIAAELAQRGLKVQGLSP.

The protein belongs to the lycopene cyclase family. The cofactor is FAD.

It catalyses the reaction a carotenoid psi-end group = a carotenoid beta-end derivative. It carries out the reaction all-trans-lycopene = gamma-carotene. The enzyme catalyses gamma-carotene = all-trans-beta-carotene. The catalysed reaction is all-trans-neurosporene = beta-zeacarotene. Its pathway is carotenoid biosynthesis; beta-carotene biosynthesis. It functions in the pathway carotenoid biosynthesis; beta-zeacarotene biosynthesis. Inhibited by the bleaching herbicide 2-(4-methylphenoxy)triethylamine hydrochloride (MPTA). Functionally, catalyzes the double cyclization reaction which converts lycopene to beta-carotene. It also converts neurosporene to the monocyclic beta-zeacarotene but does not cyclize zeta-carotene. This is Lycopene beta cyclase from Synechococcus elongatus (strain ATCC 33912 / PCC 7942 / FACHB-805) (Anacystis nidulans R2).